A 216-amino-acid polypeptide reads, in one-letter code: MOB kinase activator 1A (216 aa).

An N-acetylserine modification is found at S2. Residues T12 and T35 each carry the phosphothreonine modification. At T74 the chain carries Phosphothreonine; by STK3/MST2. Residues C79, C84, H161, and H166 each contribute to the Zn(2+) site. The residue at position 181 (T181) is a Phosphothreonine.

This sequence belongs to the MOB1/phocein family. As to quaternary structure, binds STK38 and STK38L. Interacts with LATS1 and LATS2. Forms a tripartite complex with STK38 and STK3/MST2. In terms of processing, phosphorylated by STK3/MST2 and STK4/MST1 and this phosphorylation enhances its binding to LATS1. In terms of tissue distribution, adrenal gland, bone marrow, brain, placenta, prostate, salivary gland, skeletal muscle, testis, thymus, thyroid gland, heart, spinal cord, fetal brain and fetal liver.

Activator of LATS1/2 in the Hippo signaling pathway which plays a pivotal role in organ size control and tumor suppression by restricting proliferation and promoting apoptosis. The core of this pathway is composed of a kinase cascade wherein STK3/MST2 and STK4/MST1, in complex with its regulatory protein SAV1, phosphorylates and activates LATS1/2 in complex with its regulatory protein MOB1, which in turn phosphorylates and inactivates YAP1 oncoprotein and WWTR1/TAZ. Phosphorylation of YAP1 by LATS1/2 inhibits its translocation into the nucleus to regulate cellular genes important for cell proliferation, cell death, and cell migration. Stimulates the kinase activity of STK38 and STK38L. Acts cooperatively with STK3/MST2 to activate STK38. This chain is MOB kinase activator 1A, found in Homo sapiens (Human).